The sequence spans 1328 residues: Protein turtle homolog B (1328 aa).

The signal sequence occupies residues methionine 1–glycine 17. Topologically, residues leucine 18–proline 722 are extracellular. 5 Ig-like domains span residues proline 30 to valine 115, proline 139 to glutamine 226, proline 228 to threonine 320, proline 324 to valine 415, and proline 420 to threonine 504. 2 disulfide bridges follow: cysteine 45/cysteine 113 and cysteine 161/cysteine 208. N-linked (GlcNAc...) asparagine glycosylation is found at asparagine 241 and asparagine 258. 3 cysteine pairs are disulfide-bonded: cysteine 250–cysteine 303, cysteine 346–cysteine 397, and cysteine 442–cysteine 488. 2 consecutive Fibronectin type-III domains span residues alanine 512–phenylalanine 604 and leucine 614–isoleucine 708. Asparagine 624 is a glycosylation site (N-linked (GlcNAc...) asparagine). A helical membrane pass occupies residues valine 723–leucine 743. Over alanine 744–glycine 1328 the chain is Cytoplasmic. 3 disordered regions span residues arginine 758–leucine 817, proline 914–tryptophan 1040, and lysine 1106–glycine 1328. Phosphoserine is present on residues serine 775, serine 783, and serine 794. A compositionally biased stretch (low complexity) spans serine 990 to leucine 1001. Polar residues-rich tracts occupy residues glutamate 1018–glycine 1033, leucine 1129–glycine 1141, and serine 1199–glycine 1214. Residue arginine 1136 is modified to Omega-N-methylarginine. A phosphoserine mark is found at serine 1207 and serine 1215. A compositionally biased stretch (low complexity) spans serine 1246–threonine 1273. Composition is skewed to pro residues over residues proline 1284–proline 1295 and proline 1318–glycine 1328.

It belongs to the immunoglobulin superfamily. Turtle family. Found in a complex with MAGI2 and NLGN2, where it interacts with MAGI2 (via PDZ 5 and PDZ 6 domains). In terms of processing, N-glycosylated and sialylated. Not significantly O-glycosylated. In terms of tissue distribution, detected in brain.

The protein localises to the cell membrane. Its subcellular location is the postsynaptic cell membrane. It localises to the postsynaptic density. Functionally, transmembrane protein which is abundantly expressed in interneurons, where it may regulate inhibitory synapse development. May mediate homophilic cell adhesion. This chain is Protein turtle homolog B, found in Mus musculus (Mouse).